A 1096-amino-acid chain; its full sequence is Serine-repeat antigen protein 3 (1096 aa).

An N-terminal signal peptide occupies residues 1–21 (MARLSSIVFIICLLLCNNAIS). The tract at residues 28–205 (PSSGGTLSGG…RSPPPQVNNI (178 aa)) is disordered. Low complexity predominate over residues 77–97 (NSDSTGDSSLGSTGSNGSQPA). Residue N92 is glycosylated (N-linked (GlcNAc...) asparagine). A compositionally biased stretch (basic and acidic residues) spans 102–113 (KEPEPTTPKEPE). Polar residues predominate over residues 123–147 (VTPQKTAETASGKQVSPTPSENPPS). Basic and acidic residues predominate over residues 149–161 (DTPKPESSSEKKV). N-linked (GlcNAc...) asparagine glycans are attached at residues N204, N607, N637, N662, N671, N712, N892, and N951. 2 disordered regions span residues 916-952 (EAKN…QANS) and 964-1006 (NQRT…ASAN). Polar residues-rich tracts occupy residues 925–952 (QNYG…QANS) and 964–975 (NQRTADSNPNAQ). Over residues 976 to 1006 (STPSPNTTVTDTVNSNTANSNTANSNTASAN) the composition is skewed to low complexity. N981 and N1039 each carry an N-linked (GlcNAc...) asparagine glycan.

The protein belongs to the peptidase C1 family. In terms of processing, proteolytically cleaved in both blood and liver stage parasites. Precursor of 130 kDa is processed into 72 kDa and 55 kDa forms. Proteolytically cleaved by SUB1.

The protein resides in the cell membrane. It localises to the parasitophorous vacuole. It is found in the secreted. The protein localises to the host cytoplasm. Its function is as follows. Putative cysteine protease. Probably involved in merozoite release from the parasitophorous vacuole during liver stages. The chain is Serine-repeat antigen protein 3 from Plasmodium berghei (strain Anka).